Here is a 206-residue protein sequence, read N- to C-terminus: Orotate phosphoribosyltransferase (206 aa).

Residues Arg93, Lys97, His99, and 119 to 127 (EDLISTGGT) contribute to the 5-phospho-alpha-D-ribose 1-diphosphate site. Ser123 contacts orotate.

It belongs to the purine/pyrimidine phosphoribosyltransferase family. PyrE subfamily. As to quaternary structure, homodimer. Mg(2+) serves as cofactor.

It carries out the reaction orotidine 5'-phosphate + diphosphate = orotate + 5-phospho-alpha-D-ribose 1-diphosphate. It participates in pyrimidine metabolism; UMP biosynthesis via de novo pathway; UMP from orotate: step 1/2. Its function is as follows. Catalyzes the transfer of a ribosyl phosphate group from 5-phosphoribose 1-diphosphate to orotate, leading to the formation of orotidine monophosphate (OMP). The protein is Orotate phosphoribosyltransferase of Bacillus caldolyticus.